We begin with the raw amino-acid sequence, 79 residues long: Small ribosomal subunit protein bS18 (79 aa).

This sequence belongs to the bacterial ribosomal protein bS18 family. In terms of assembly, part of the 30S ribosomal subunit. Forms a tight heterodimer with protein bS6.

In terms of biological role, binds as a heterodimer with protein bS6 to the central domain of the 16S rRNA, where it helps stabilize the platform of the 30S subunit. This Bacillus velezensis (strain DSM 23117 / BGSC 10A6 / LMG 26770 / FZB42) (Bacillus amyloliquefaciens subsp. plantarum) protein is Small ribosomal subunit protein bS18.